Here is an 85-residue protein sequence, read N- to C-terminus: Large ribosomal subunit protein bL31B (85 aa).

This sequence belongs to the bacterial ribosomal protein bL31 family. Type B subfamily. In terms of assembly, part of the 50S ribosomal subunit.

This is Large ribosomal subunit protein bL31B from Vibrio cholerae serotype O1 (strain ATCC 39541 / Classical Ogawa 395 / O395).